The primary structure comprises 337 residues: 5-dehydro-2-deoxygluconokinase (337 aa).

This sequence belongs to the carbohydrate kinase PfkB family.

It carries out the reaction 5-dehydro-2-deoxy-D-gluconate + ATP = 6-phospho-5-dehydro-2-deoxy-D-gluconate + ADP + H(+). The protein operates within polyol metabolism; myo-inositol degradation into acetyl-CoA; acetyl-CoA from myo-inositol: step 5/7. Its function is as follows. Catalyzes the phosphorylation of 5-dehydro-2-deoxy-D-gluconate (2-deoxy-5-keto-D-gluconate or DKG) to 6-phospho-5-dehydro-2-deoxy-D-gluconate (DKGP). This Geobacillus thermodenitrificans (strain NG80-2) protein is 5-dehydro-2-deoxygluconokinase.